A 259-amino-acid polypeptide reads, in one-letter code: Probable metal transport system ATP-binding protein CT_068 (259 aa).

Positions 9 to 241 (WSVEDLCVNY…AIFQAYGCEL (233 aa)) constitute an ABC transporter domain. 41–48 (GPNGAGKS) contributes to the ATP binding site.

It belongs to the ABC transporter superfamily.

It is found in the cell inner membrane. Its function is as follows. Part of an ATP-driven transport system CT_067/CT_068/CT_069/CT_070 for a metal. Probably responsible for energy coupling to the transport system. The chain is Probable metal transport system ATP-binding protein CT_068 from Chlamydia trachomatis serovar D (strain ATCC VR-885 / DSM 19411 / UW-3/Cx).